The following is a 344-amino-acid chain: Adenine deaminase (344 aa).

Residues H24, H26, and H204 each coordinate Zn(2+). E207 functions as the Proton donor in the catalytic mechanism. Position 285 (D285) interacts with Zn(2+). D286 serves as a coordination point for substrate.

It belongs to the metallo-dependent hydrolases superfamily. Adenosine and AMP deaminases family. Adenine deaminase type 2 subfamily. Zn(2+) is required as a cofactor.

It carries out the reaction adenine + H2O + H(+) = hypoxanthine + NH4(+). Functionally, catalyzes the hydrolytic deamination of adenine to hypoxanthine. Plays an important role in the purine salvage pathway and in nitrogen catabolism. In Caulobacter vibrioides (strain ATCC 19089 / CIP 103742 / CB 15) (Caulobacter crescentus), this protein is Adenine deaminase.